The primary structure comprises 525 residues: Protein MGF 505-6R (525 aa).

4 ANK repeats span residues 54-83 (SINDALQLAGEEGDTDVVQLLLLWEGNLHY), 129-158 (ACDFICLLQHAVKYNMLSILVKYKEDLLNV), 261-291 (NIHRALSYAVTHNRRKILDYLIRQKNIAPNT), and 324-351 (KKLVEHVVNEKSTLVLKILLEKKENLVD).

It belongs to the asfivirus MGF 505 family.

Plays a role in virus cell tropism, and may be required for efficient virus replication in macrophages. The chain is Protein MGF 505-6R from Ornithodoros (relapsing fever ticks).